The chain runs to 327 residues: Chain length determinant protein (327 aa).

Residues 1–31 (MSISDNNMSGRSHDPEQIDLIDLLMQLWRGK) lie on the Cytoplasmic side of the membrane. A helical membrane pass occupies residues 32-52 (VTIIICIVVAIALAVGYLAVA). The Periplasmic segment spans residues 53–294 (KEKWTSIAIV…LPIRRDSPKK (242 aa)). The chain crosses the membrane as a helical span at residues 295–315 (AITLVLAVLIGGMIGAGVVLG). At 316 to 327 (RNALRGYKAKAE) the chain is on the cytoplasmic side.

Belongs to the WzzB/Cld/Rol family.

It is found in the cell inner membrane. Its pathway is bacterial outer membrane biogenesis; lipopolysaccharide biosynthesis. Confers a modal distribution of chain length on the O-antigen component of lipopolysaccharide (LPS). Gives rise to a reduced number of short chain molecules and increases in numbers of longer molecules, with a modal value of 13 (in strain O111/M92) and of 17 (in strain K12). This Escherichia coli O111:H- protein is Chain length determinant protein (wzzB).